The following is a 315-amino-acid chain: tRNA dimethylallyltransferase (315 aa).

ATP is bound at residue 14–21; sequence GATATGKS. 16–21 contributes to the substrate binding site; sequence TATGKS. An interaction with substrate tRNA region spans residues 39–42; sequence DSRQ.

Belongs to the IPP transferase family. Monomer. Mg(2+) is required as a cofactor.

The catalysed reaction is adenosine(37) in tRNA + dimethylallyl diphosphate = N(6)-dimethylallyladenosine(37) in tRNA + diphosphate. Catalyzes the transfer of a dimethylallyl group onto the adenine at position 37 in tRNAs that read codons beginning with uridine, leading to the formation of N6-(dimethylallyl)adenosine (i(6)A). The sequence is that of tRNA dimethylallyltransferase from Microcystis aeruginosa (strain NIES-843 / IAM M-2473).